A 469-amino-acid chain; its full sequence is UDP-N-acetylmuramate--L-alanine ligase (469 aa).

Position 112-118 (112-118) interacts with ATP; that stretch reads GTHGKTT.

The protein belongs to the MurCDEF family.

The protein localises to the cytoplasm. The catalysed reaction is UDP-N-acetyl-alpha-D-muramate + L-alanine + ATP = UDP-N-acetyl-alpha-D-muramoyl-L-alanine + ADP + phosphate + H(+). Its pathway is cell wall biogenesis; peptidoglycan biosynthesis. Functionally, cell wall formation. The polypeptide is UDP-N-acetylmuramate--L-alanine ligase (Herminiimonas arsenicoxydans).